A 287-amino-acid chain; its full sequence is Prepilin leader peptidase/N-methyltransferase (287 aa).

A helical transmembrane segment spans residues 12–32 (FMYLVVGLFSLAVGSLLNVII). 4 residues coordinate Zn(2+): C71, C74, C96, and C99. The next 5 membrane-spanning stretches (helical) occupy residues 127–147 (FTIQ…LVFI), 158–178 (LTLG…FVSL), 182–202 (VLSC…FYLM), 215–235 (LFAA…LLIS), and 259–279 (PFGP…DSII).

It belongs to the peptidase A24 family. Zn(2+) is required as a cofactor.

It is found in the cell inner membrane. It carries out the reaction Typically cleaves a -Gly-|-Phe- bond to release an N-terminal, basic peptide of 5-8 residues from type IV prepilin, and then N-methylates the new N-terminal amino group, the methyl donor being S-adenosyl-L-methionine.. Plays an essential role in type IV pili and type II pseudopili formation by proteolytically removing the leader sequence from substrate proteins and subsequently monomethylating the alpha-amino group of the newly exposed N-terminal phenylalanine. The polypeptide is Prepilin leader peptidase/N-methyltransferase (pilD) (Legionella pneumophila).